The sequence spans 223 residues: Transcriptional regulator HMO1 (223 aa).

Disordered regions lie at residues 69 to 89 (IEATESKKKRKQEKDPNAPKK) and 165 to 223 (DGSA…HGSP). Over residues 70–86 (EATESKKKRKQEKDPNA) the composition is skewed to basic and acidic residues. Positions 87–160 (PKKPLTMFFQ…IYNIEKKKYE (74 aa)) form a DNA-binding region, HMG box. The span at 204-223 (KKKKKTEKKEKKKKSGHGSP) shows a compositional bias: basic residues.

It is found in the nucleus. Functionally, transcription factor that binds upstream of hexose and ergosterol metabolism, as well as cell cycle genes. Activates pseudohyphal growth. In Candida albicans (strain SC5314 / ATCC MYA-2876) (Yeast), this protein is Transcriptional regulator HMO1 (HMO1).